A 123-amino-acid chain; its full sequence is Protein Wnt-3a (123 aa).

The O-palmitoleoyl serine moiety is linked to residue S1. Cysteines 89 and 104 form a disulfide. N90 carries an N-linked (GlcNAc...) asparagine glycan.

It belongs to the Wnt family. Disulfide bonds have critical and distinct roles in secretion and activity. Loss of each conserved cysteine results in high molecular weight oxidized Wnt oligomers, which are formed through inter-Wnt disulfide bonding. In terms of processing, palmitoleoylation is required for efficient binding to frizzled receptors. Depalmitoleoylation leads to Wnt signaling pathway inhibition.

It localises to the secreted. It is found in the extracellular space. The protein localises to the extracellular matrix. Its function is as follows. Ligand for members of the frizzled family of seven transmembrane receptors. Functions in the canonical Wnt signaling pathway that results in activation of transcription factors of the TCF/LEF family. Required for normal embryonic mesoderm development and formation of caudal somites. Required for normal morphogenesis of the developing neural tube. The protein is Protein Wnt-3a (WNT-3A) of Plethodon jordani (Red-cheeked salamander).